Reading from the N-terminus, the 283-residue chain is Tetraspanin-33 (283 aa).

The Cytoplasmic segment spans residues 1–24 (MARRPGVPAAYGDEFSFVSPLVKY). Residues 25–45 (LLFFFNMLFWVISMVMVAVGV) traverse the membrane as a helical segment. The Extracellular portion of the chain corresponds to 46–64 (YARLMKHAEAALACLAVDP). A helical transmembrane segment spans residues 65–85 (AILLIVVGVLMFLLTFCGCIG). Over 86–96 (SLRENICLLQT) the chain is Cytoplasmic. The helical transmembrane segment at 97–117 (FSLCLTIVFLLQLAAGILGFV) threads the bilayer. Residues 118–235 (FSDKARGKVS…DKLVNWIHSN (118 aa)) are Extracellular-facing. 4 disulfides stabilise this stretch: cysteine 156/cysteine 224, cysteine 157/cysteine 189, cysteine 173/cysteine 183, and cysteine 190/cysteine 203. The N-linked (GlcNAc...) asparagine glycan is linked to asparagine 172. The helical transmembrane segment at 236–256 (LFLLGGVALGLAIPQLVGILL) threads the bilayer. Topologically, residues 257 to 283 (SQVLVNQIKDQIKLQLYNQQHRADPWY) are cytoplasmic.

Belongs to the tetraspanin (TM4SF) family. Homodimer; disulfide-linked. Interacts (via extracellular domain) with ADAM10 (via extracellular domain). Interacts (via cytoplasmic domain) with PLEKHA7 (via WW domains); the interaction is dependent on PDZD11 being bound to PLEKHA7 and facilitates the docking of ADAM10 to zonula adherens. In terms of tissue distribution, predominantly expressed in erythroblasts.

The protein localises to the cell membrane. It localises to the cell junction. Its subcellular location is the adherens junction. The protein resides in the cytoplasm. Its function is as follows. Part of TspanC8 subgroup, composed of 6 members that interact with the transmembrane metalloprotease ADAM10. This interaction is required for ADAM10 exit from the endoplasmic reticulum and for enzymatic maturation and trafficking to the cell surface as well as substrate specificity. Different TspanC8/ADAM10 complexes have distinct substrates. Plays an important role in normal erythropoiesis. It has a role in the differentiation of erythroid progenitors. Negatively regulates ligand-induced Notch activity probably by regulating ADAM10 activity. Mediates docking of ADAM10 to zonula adherens by interacting with ADAM10 and, in a PDZD11-dependent manner, with the zonula adherens protein PLEKHA7. The polypeptide is Tetraspanin-33 (Tspan33) (Mus musculus (Mouse)).